The chain runs to 203 residues: Thymidylate kinase (203 aa).

An ATP-binding site is contributed by 14–21 (GGEGIGKS).

Belongs to the thymidylate kinase family.

The enzyme catalyses dTMP + ATP = dTDP + ADP. Its function is as follows. Phosphorylation of dTMP to form dTDP in both de novo and salvage pathways of dTTP synthesis. This Rickettsia africae (strain ESF-5) protein is Thymidylate kinase.